Here is a 276-residue protein sequence, read N- to C-terminus: F420-dependent methylenetetrahydromethanopterin dehydrogenase (276 aa).

The interval 253–276 is disordered; sequence TVLRTPHGKEGKTLSKKDLLAKPE. Residues 259–276 are compositionally biased toward basic and acidic residues; the sequence is HGKEGKTLSKKDLLAKPE.

Belongs to the MTD family. As to quaternary structure, found to be tightly associated with methyl-coenzyme M methylreductase.

The catalysed reaction is 5,10-methylenetetrahydromethanopterin + oxidized coenzyme F420-(gamma-L-Glu)(n) + 2 H(+) = 5,10-methenyl-5,6,7,8-tetrahydromethanopterin + reduced coenzyme F420-(gamma-L-Glu)(n). The protein operates within one-carbon metabolism; methanogenesis from CO(2); 5,10-methylene-5,6,7,8-tetrahydromethanopterin from 5,10-methenyl-5,6,7,8-tetrahydromethanopterin (coenzyme F420 route): step 1/1. With respect to regulation, activity requires salt; 100 mM sodium or potassium salts of chloride, phosphate or sulfate are equally effective. Not inactivated by O(2). Inhibited by hydrogen-producing 5,10-methenyltetrahydromethanopterin hydrogenase which has a higher affinity for their shared substrate. Enzyme is O(2)-stable and strictly dependent on coenzyme F420. Its function is as follows. Catalyzes the reversible reduction of methenyl-H(4)MPT(+) to methylene-H(4)MPT. The sequence is that of F420-dependent methylenetetrahydromethanopterin dehydrogenase from Methanothermobacter marburgensis (strain ATCC BAA-927 / DSM 2133 / JCM 14651 / NBRC 100331 / OCM 82 / Marburg) (Methanobacterium thermoautotrophicum).